The chain runs to 539 residues: GMP synthase [glutamine-hydrolyzing] (539 aa).

The Glutamine amidotransferase type-1 domain maps to 4-202 (KILILDFGSQ…VLQIAGCKPD (199 aa)). C81 (nucleophile) is an active-site residue. Residues H176 and E178 contribute to the active site. The GMPS ATP-PPase domain occupies 203–395 (WVMRDHIEEA…LGLPPEMVYR (193 aa)). 230-236 (SGGVDSS) is a binding site for ATP.

As to quaternary structure, homodimer.

The catalysed reaction is XMP + L-glutamine + ATP + H2O = GMP + L-glutamate + AMP + diphosphate + 2 H(+). Its pathway is purine metabolism; GMP biosynthesis; GMP from XMP (L-Gln route): step 1/1. Functionally, catalyzes the synthesis of GMP from XMP. The protein is GMP synthase [glutamine-hydrolyzing] of Cupriavidus taiwanensis (strain DSM 17343 / BCRC 17206 / CCUG 44338 / CIP 107171 / LMG 19424 / R1) (Ralstonia taiwanensis (strain LMG 19424)).